A 257-amino-acid polypeptide reads, in one-letter code: Pyridoxine 5'-phosphate synthase (257 aa).

Asn-6 is a binding site for 3-amino-2-oxopropyl phosphate. 8–9 serves as a coordination point for 1-deoxy-D-xylulose 5-phosphate; the sequence is DH. Arg-17 serves as a coordination point for 3-amino-2-oxopropyl phosphate. The active-site Proton acceptor is His-41. 2 residues coordinate 1-deoxy-D-xylulose 5-phosphate: Arg-43 and His-48. The Proton acceptor role is filled by Glu-68. Thr-98 contacts 1-deoxy-D-xylulose 5-phosphate. His-210 serves as the catalytic Proton donor. 3-amino-2-oxopropyl phosphate-binding positions include Gly-211 and 232 to 233; that span reads GQ.

The protein belongs to the PNP synthase family. As to quaternary structure, homooctamer; tetramer of dimers.

The protein localises to the cytoplasm. It catalyses the reaction 3-amino-2-oxopropyl phosphate + 1-deoxy-D-xylulose 5-phosphate = pyridoxine 5'-phosphate + phosphate + 2 H2O + H(+). The protein operates within cofactor biosynthesis; pyridoxine 5'-phosphate biosynthesis; pyridoxine 5'-phosphate from D-erythrose 4-phosphate: step 5/5. Its function is as follows. Catalyzes the complicated ring closure reaction between the two acyclic compounds 1-deoxy-D-xylulose-5-phosphate (DXP) and 3-amino-2-oxopropyl phosphate (1-amino-acetone-3-phosphate or AAP) to form pyridoxine 5'-phosphate (PNP) and inorganic phosphate. The polypeptide is Pyridoxine 5'-phosphate synthase (Campylobacter jejuni (strain RM1221)).